The chain runs to 71 residues: MTLTVKCPQCQKPVTWDASSAFKPFCSERCKLIDLGDWASEKHAIPVKDDISEELLDQLGYEEADFFKTAD.

Zn(2+) contacts are provided by Cys7, Cys10, Cys26, and Cys30.

This sequence belongs to the DNA gyrase inhibitor YacG family. Interacts with GyrB. It depends on Zn(2+) as a cofactor.

In terms of biological role, inhibits all the catalytic activities of DNA gyrase by preventing its interaction with DNA. Acts by binding directly to the C-terminal domain of GyrB, which probably disrupts DNA binding by the gyrase. This Shewanella amazonensis (strain ATCC BAA-1098 / SB2B) protein is DNA gyrase inhibitor YacG.